The chain runs to 100 residues: Large ribosomal subunit protein uL23 (100 aa).

It belongs to the universal ribosomal protein uL23 family. In terms of assembly, part of the 50S ribosomal subunit. Contacts protein L29, and trigger factor when it is bound to the ribosome.

Functionally, one of the early assembly proteins it binds 23S rRNA. One of the proteins that surrounds the polypeptide exit tunnel on the outside of the ribosome. Forms the main docking site for trigger factor binding to the ribosome. In Yersinia pestis bv. Antiqua (strain Antiqua), this protein is Large ribosomal subunit protein uL23.